A 477-amino-acid polypeptide reads, in one-letter code: Transcription factor Sox-9-A (477 aa).

Disordered stretches follow at residues 1 to 66 (MNLL…ETED) and 157 to 274 (EAER…FRDV). A compositionally biased stretch (low complexity) spans 27 to 42 (SDDSAGSPCPSGSGSD). 2 stretches are compositionally biased toward basic and acidic residues: residues 56–66 (GDQELKKETED) and 157–174 (EAERLRVQHKKDHPDYKY). Lys61 participates in a covalent cross-link: Glycyl lysine isopeptide (Lys-Gly) (interchain with G-Cter in SUMO). The segment at 63-103 (ETEDEKFPVCIREAVSQVLKGYDWTLVPMPVRVNGSSKNKP) is dimerization (DIM). The tract at residues 63–103 (ETEDEKFPVCIREAVSQVLKGYDWTLVPMPVRVNGSSKNKP) is PQA. The HMG box DNA-binding region spans 105 to 173 (VKRPMNAFMV…QHKKDHPDYK (69 aa)). The segment covering 211 to 222 (SPHSSSSMSEVH) has biased composition (low complexity). The segment at 224-308 (PGEHSGQSQG…LPPNGHPGVG (85 aa)) is transactivation domain (TAM). Short sequence motifs (9aaTAD) lie at residues 276-285 (IGELSSEVIS) and 291-299 (DVNEFDQYL). The disordered stretch occupies residues 301 to 384 (PNGHPGVGST…SDQQQQHSPQ (84 aa)). Composition is skewed to polar residues over residues 308-328 (GSTQASYTGSYGISSTPSATT) and 346-361 (HSLSTLNSEQSQSQQR). Positions 361 to 477 (RTHIKTEQLS…QPVYTQLTRP (117 aa)) are transactivation domain (TAC). A Glycyl lysine isopeptide (Lys-Gly) (interchain with G-Cter in SUMO) cross-link involves residue Lys365. The segment covering 370 to 384 (SPSHYSDQQQQHSPQ) has biased composition (low complexity). The short motif at 428 to 436 (SGLYSTFSY) is the 9aaTAD 3 element. The disordered stretch occupies residues 446 to 477 (TPIADTTGVPSIPQTHSPQHWEQPVYTQLTRP). Residues 453–477 (GVPSIPQTHSPQHWEQPVYTQLTRP) show a composition bias toward polar residues.

As to quaternary structure, interacts with the sumoylation factors ube2i/ubc9 and sumo1. In terms of processing, sumoylated. Lys-365 is the major site of sumoylation, although sumoylation at Lys-61 also occurs. Sumoylation plays a key role in regulating formation of the neural crest and otic placode. As to expression, from mid-gastrula (stage 10.5-11), expressed in a ring around the blastopore, with expression decreasing toward the dorsal side. At stage 12, expression around the blastopore decreases and begins to increase lateral to the neural plate in the presumptive neural crest, where expression dramatically increases around stage 14. Also expressed in the otic placode as early as stage 13/14. By the tailbud stage expression is restricted to the otic cup and then throughout the otic vesicle, with more intense staining at the dorsal-most region, the prospective region of the semicircular canals and endolymphatic duct. At the early tailbud stage (stage 23), expressed in migrating cranial neural crest cells and in the trunk neural crest. Also expressed in the genital ridges, developing eye, nasal placode and prospective pineal gland. Around stage 25, expression is down-regulated in the trunk neural crest but persists in the migrating cranial crest cells as they populate the pharyngeal arches, otic placode, developing eye, genital ridges and notochord. By stage 31, expression remains strong in the pharyngeal arches. Also expressed in the pancreas; first expressed at stage 25 in the pancreatic anlagen, dorsally in diverticulum. As development proceeds, expression continues in pancreatic tissue, being restricted to ventral and dorsal pancreatic buds.

The protein localises to the nucleus. It localises to the cytoplasm. Its function is as follows. Transcription factor that plays a key role in chondrocytes differentiation and skeletal development. Specifically binds the 5'-ACAAAG-3' DNA motif present in enhancers and super-enhancers and promotes expression of genes important for chondrogenesis, including COL2A1. Plays a central role in successive steps of chondrocyte differentiation. Absolutely required for precartilaginous condensation, the first step in chondrogenesis during which skeletal progenitors differentiate into prechondrocytes. Together with SOX5 and SOX6, required for overt chondrogenesis when condensed prechondrocytes differentiate into early stage chondrocytes, the second step in chondrogenesis. Later, required to direct hypertrophic maturation and block osteoblast differentiation of growth plate chondrocytes: maintains chondrocyte columnar proliferation, delays prehypertrophy and then prevents osteoblastic differentiation of chondrocytes. Also required for chondrocyte hypertrophy, both indirectly, by keeping the lineage fate of chondrocytes, and directly, by remaining present in upper hypertrophic cells. Low lipid levels are the main nutritional determinant for chondrogenic commitment of skeletal progenitor cells: when lipids levels are low, FOXO transcription factors promote expression of SOX9, which induces chondrogenic commitment and suppresses fatty acid oxidation. In addition to cartilage development, also acts as a regulator of proliferation and differentiation in epithelial stem/progenitor cells. Involved in development of the cranial neural crest, which is fated to form skeletal elements. Also required for otic placode specification during inner ear development. The chain is Transcription factor Sox-9-A (sox9-a) from Xenopus laevis (African clawed frog).